Reading from the N-terminus, the 302-residue chain is MQKFDTKTFQGLILALQDFWARQGCAIVQPLDMEVGAGTFHPQTFLRSIGPEPMNSAYVQPCRRPTDGRYGENPNRLQQYYQFQVVLKPSPKNIQDLYLKSLEEIGIDTSIHDIRFVEDNWESPTLGAWGLGWEIWLNGMEVTQFTYFQQVGGLECSPVTGEITYGLERIAMYVQGVESIYDLVWTDGPMGKLTYGDIFHQNEVEQSSYNFEHADVDALFNQFNQCEKDSQKLIEAGLALPAYEQVMKASHAFNLLDARHAISVTERQRYILRVRALSKAVAEAYYGKREALGFPLCKNLVK.

It belongs to the class-II aminoacyl-tRNA synthetase family. Tetramer of two alpha and two beta subunits.

The protein localises to the cytoplasm. The enzyme catalyses tRNA(Gly) + glycine + ATP = glycyl-tRNA(Gly) + AMP + diphosphate. The chain is Glycine--tRNA ligase alpha subunit from Psychromonas ingrahamii (strain DSM 17664 / CCUG 51855 / 37).